Reading from the N-terminus, the 460-residue chain is ATP synthase subunit beta (460 aa).

An ATP-binding site is contributed by 150–157; the sequence is GGAGVGKT.

The protein belongs to the ATPase alpha/beta chains family. As to quaternary structure, F-type ATPases have 2 components, CF(1) - the catalytic core - and CF(0) - the membrane proton channel. CF(1) has five subunits: alpha(3), beta(3), gamma(1), delta(1), epsilon(1). CF(0) has three main subunits: a(1), b(2) and c(9-12). The alpha and beta chains form an alternating ring which encloses part of the gamma chain. CF(1) is attached to CF(0) by a central stalk formed by the gamma and epsilon chains, while a peripheral stalk is formed by the delta and b chains.

It is found in the cell inner membrane. It catalyses the reaction ATP + H2O + 4 H(+)(in) = ADP + phosphate + 5 H(+)(out). Produces ATP from ADP in the presence of a proton gradient across the membrane. The catalytic sites are hosted primarily by the beta subunits. The polypeptide is ATP synthase subunit beta (Serratia proteamaculans (strain 568)).